The primary structure comprises 714 residues: ATP-dependent DNA helicase DinG (714 aa).

The Helicase ATP-binding domain maps to 17-294 (ALQDQIPDFI…TCMEQFRPKT (278 aa)). 54 to 61 (APTGVGKT) is an ATP binding site. Positions 120, 194, 199, and 205 each coordinate [4Fe-4S] cluster. A DEAH box motif is present at residues 248–251 (DEGH). The Helicase C-terminal domain maps to 517–698 (HIAEMAAYFR…VFPIEQPAVP (182 aa)).

The protein belongs to the helicase family. DinG subfamily. Type 1 sub-subfamily. [4Fe-4S] cluster is required as a cofactor.

The catalysed reaction is Couples ATP hydrolysis with the unwinding of duplex DNA at the replication fork by translocating in the 5'-3' direction. This creates two antiparallel DNA single strands (ssDNA). The leading ssDNA polymer is the template for DNA polymerase III holoenzyme which synthesizes a continuous strand.. The enzyme catalyses ATP + H2O = ADP + phosphate + H(+). Functionally, DNA-dependent ATPase and 5'-3' DNA helicase. Unwinds D-loops, R-loops, forked DNA and G-quadruplex DNA. This Salmonella paratyphi A (strain ATCC 9150 / SARB42) protein is ATP-dependent DNA helicase DinG.